We begin with the raw amino-acid sequence, 339 residues long: Dihydroorotate dehydrogenase (quinone) (339 aa).

Residues 64-68 (AGADK) and threonine 88 each bind FMN. Lysine 68 serves as a coordination point for substrate. 113-117 (NRNGF) contributes to the substrate binding site. Positions 141 and 174 each coordinate FMN. Asparagine 174 contacts substrate. Catalysis depends on serine 177, which acts as the Nucleophile. Residue asparagine 179 participates in substrate binding. 2 residues coordinate FMN: lysine 219 and threonine 247. Position 248 to 249 (248 to 249 (NT)) interacts with substrate. Residues glycine 270, glycine 299, and 320–321 (YS) each bind FMN.

This sequence belongs to the dihydroorotate dehydrogenase family. Type 2 subfamily. As to quaternary structure, monomer. FMN serves as cofactor.

Its subcellular location is the cell membrane. It catalyses the reaction (S)-dihydroorotate + a quinone = orotate + a quinol. It functions in the pathway pyrimidine metabolism; UMP biosynthesis via de novo pathway; orotate from (S)-dihydroorotate (quinone route): step 1/1. Catalyzes the conversion of dihydroorotate to orotate with quinone as electron acceptor. The chain is Dihydroorotate dehydrogenase (quinone) from Haemophilus influenzae (strain PittEE).